The sequence spans 415 residues: Nuclear hormone receptor family member nhr-153 (415 aa).

Residues 26-105 constitute a DNA-binding region (nuclear receptor); sequence PSVCQICRNP…AGMNPMAIQA (80 aa). NR C4-type zinc fingers lie at residues 29–49 and 65–88; these read CQICRNPAIGYHYEVPSCNGC and CFKVSNCLDGNDVIDTSKRVCRAC. In terms of domain architecture, NR LBD spans 170–406; that stretch reads DQRDLSTALS…DPEVLKKKCI (237 aa).

The protein belongs to the nuclear hormone receptor family.

It localises to the nucleus. Orphan nuclear receptor. The protein is Nuclear hormone receptor family member nhr-153 (nhr-153) of Caenorhabditis elegans.